Reading from the N-terminus, the 192-residue chain is MVSKPRTEWSTVLSHLVLAGVSLHAAVSSVQSSRGAAAGFLLQTFAAIIMLAPGPSTHEDCLAGAWVATVIGLPLLAFDFHWVNGDRSSANLLLGGGMVLAVAGDHLGPEGCSVAGQAVLLVVAVTILIVAVFTANTYGMWGGTLLGVAGLLSRLEEDRLLLLPKEDVCRWALAAGSWAYCRALHTQRLQWE.

Residues Met1–Ser32 form the signal peptide. 4 helical membrane-spanning segments follow: residues Gly35 to Pro55, Ala63 to Val83, Leu92 to Cys112, and Val114 to Thr134.

It is found in the membrane. This chain is Transmembrane protein 276, found in Mus musculus (Mouse).